The following is a 520-amino-acid chain: Ubiquitin carboxyl-terminal hydrolase MINDY-1 (520 aa).

The interval 1–155 (MADSCADTVD…ENEGAVAGAM (155 aa)) is disordered. Positions 26–37 (KNEDLEQTKPQK) are enriched in basic and acidic residues. Polar residues predominate over residues 43 to 54 (TEESSACVSQIK). The span at 77–86 (ATSSASVTSK) shows a compositional bias: low complexity. Polar residues-rich tracts occupy residues 93–112 (VINS…SFSM) and 132–146 (SAKS…SVQE). Cysteine 189 serves as the catalytic Nucleophile. Histidine 371 (proton acceptor) is an active-site residue. Disordered regions lie at residues 422 to 441 (SQKP…QQMQ) and 467 to 520 (ELAR…CCIL). Residues 441–479 (QIDQDYLVAMSLQQEQGEAPGPLSDLELARQLQQEEYQQ) form a ubiquitin-binding domain (UBD) region. Positions 469-498 (ARQLQQEEYQQPQTQQQQQQQPSAGQMRGQ) are enriched in low complexity. The segment covering 511–520 (KKEETDCCIL) has biased composition (basic and acidic residues).

This sequence belongs to the MINDY deubiquitinase family. FAM63 subfamily.

It catalyses the reaction Thiol-dependent hydrolysis of ester, thioester, amide, peptide and isopeptide bonds formed by the C-terminal Gly of ubiquitin (a 76-residue protein attached to proteins as an intracellular targeting signal).. Its function is as follows. Hydrolase that can specifically remove 'Lys-48'-linked conjugated ubiquitin from proteins. May play a regulatory role at the level of protein turnover. The sequence is that of Ubiquitin carboxyl-terminal hydrolase MINDY-1 (mindy1) from Danio rerio (Zebrafish).